The chain runs to 244 residues: NAD(P)H-quinone oxidoreductase subunit K (244 aa).

Cys-51, Cys-52, Cys-116, and Cys-147 together coordinate [4Fe-4S] cluster.

The protein belongs to the complex I 20 kDa subunit family. In terms of assembly, NDH-1 can be composed of about 15 different subunits; different subcomplexes with different compositions have been identified which probably have different functions. It depends on [4Fe-4S] cluster as a cofactor.

It is found in the cellular thylakoid membrane. The enzyme catalyses a plastoquinone + NADH + (n+1) H(+)(in) = a plastoquinol + NAD(+) + n H(+)(out). It carries out the reaction a plastoquinone + NADPH + (n+1) H(+)(in) = a plastoquinol + NADP(+) + n H(+)(out). NDH-1 shuttles electrons from an unknown electron donor, via FMN and iron-sulfur (Fe-S) centers, to quinones in the respiratory and/or the photosynthetic chain. The immediate electron acceptor for the enzyme in this species is believed to be plastoquinone. Couples the redox reaction to proton translocation, and thus conserves the redox energy in a proton gradient. Cyanobacterial NDH-1 also plays a role in inorganic carbon-concentration. The protein is NAD(P)H-quinone oxidoreductase subunit K of Synechococcus sp. (strain JA-2-3B'a(2-13)) (Cyanobacteria bacterium Yellowstone B-Prime).